The sequence spans 277 residues: NADPH-dependent 7-cyano-7-deazaguanine reductase (277 aa).

83–85 (IES) serves as a coordination point for substrate. An NADPH-binding site is contributed by 85–86 (SK). Cys-184 (thioimide intermediate) is an active-site residue. Asp-191 functions as the Proton donor in the catalytic mechanism. 223-224 (HE) provides a ligand contact to substrate. Position 252–253 (252–253 (RG)) interacts with NADPH.

The protein belongs to the GTP cyclohydrolase I family. QueF type 2 subfamily. Homodimer.

Its subcellular location is the cytoplasm. The enzyme catalyses 7-aminomethyl-7-carbaguanine + 2 NADP(+) = 7-cyano-7-deazaguanine + 2 NADPH + 3 H(+). Its pathway is tRNA modification; tRNA-queuosine biosynthesis. In terms of biological role, catalyzes the NADPH-dependent reduction of 7-cyano-7-deazaguanine (preQ0) to 7-aminomethyl-7-deazaguanine (preQ1). This is NADPH-dependent 7-cyano-7-deazaguanine reductase from Cupriavidus pinatubonensis (strain JMP 134 / LMG 1197) (Cupriavidus necator (strain JMP 134)).